The chain runs to 173 residues: Mesencephalic astrocyte-derived neurotrophic factor homolog (173 aa).

An N-terminal signal peptide occupies residues M1 to A22. Disulfide bonds link C28–C114, C31–C103, C61–C72, and C148–C151.

The protein belongs to the ARMET family.

The protein localises to the secreted. Its function is as follows. Required during the maturation of the embryonic nervous system for maintenance of neuronal and cuticular connectivity. Essential for maintenance of dopaminergic neurons and dopamine levels. This chain is Mesencephalic astrocyte-derived neurotrophic factor homolog, found in Drosophila yakuba (Fruit fly).